A 131-amino-acid polypeptide reads, in one-letter code: Ribosome-binding factor A (131 aa).

Belongs to the RbfA family. Monomer. Binds 30S ribosomal subunits, but not 50S ribosomal subunits or 70S ribosomes.

It localises to the cytoplasm. In terms of biological role, one of several proteins that assist in the late maturation steps of the functional core of the 30S ribosomal subunit. Associates with free 30S ribosomal subunits (but not with 30S subunits that are part of 70S ribosomes or polysomes). Required for efficient processing of 16S rRNA. May interact with the 5'-terminal helix region of 16S rRNA. This is Ribosome-binding factor A from Pseudomonas fluorescens (strain SBW25).